A 269-amino-acid polypeptide reads, in one-letter code: uncharacterized protein (269 aa).

Positions 152–197 (RYFSKPAYRNAFKANTIRATTAYKKVFNDPSLGSTYPLEVPLGKMS) constitute an RPE1 insert domain.

This is an uncharacterized protein from Rickettsia prowazekii (strain Madrid E).